Here is a 157-residue protein sequence, read N- to C-terminus: 6,7-dimethyl-8-ribityllumazine synthase (157 aa).

5-amino-6-(D-ribitylamino)uracil contacts are provided by residues phenylalanine 22, 56–58 (AME), and 80–82 (AVV). Residue 85–86 (ET) coordinates (2S)-2-hydroxy-3-oxobutyl phosphate. Residue histidine 88 is the Proton donor of the active site. Residue phenylalanine 113 coordinates 5-amino-6-(D-ribitylamino)uracil. (2S)-2-hydroxy-3-oxobutyl phosphate is bound at residue arginine 127.

This sequence belongs to the DMRL synthase family.

The catalysed reaction is (2S)-2-hydroxy-3-oxobutyl phosphate + 5-amino-6-(D-ribitylamino)uracil = 6,7-dimethyl-8-(1-D-ribityl)lumazine + phosphate + 2 H2O + H(+). It functions in the pathway cofactor biosynthesis; riboflavin biosynthesis; riboflavin from 2-hydroxy-3-oxobutyl phosphate and 5-amino-6-(D-ribitylamino)uracil: step 1/2. Functionally, catalyzes the formation of 6,7-dimethyl-8-ribityllumazine by condensation of 5-amino-6-(D-ribitylamino)uracil with 3,4-dihydroxy-2-butanone 4-phosphate. This is the penultimate step in the biosynthesis of riboflavin. The polypeptide is 6,7-dimethyl-8-ribityllumazine synthase (Levilactobacillus brevis (strain ATCC 367 / BCRC 12310 / CIP 105137 / JCM 1170 / LMG 11437 / NCIMB 947 / NCTC 947) (Lactobacillus brevis)).